The primary structure comprises 215 residues: Oligoribonuclease (215 aa).

In terms of domain architecture, Exonuclease spans 5–170 (LVWIDCEMTG…ADIHESIREL (166 aa)). Y127 is a catalytic residue. The tract at residues 196-215 (LDEGKDAPGPSDSASAPPTG) is disordered. The span at 202-215 (APGPSDSASAPPTG) shows a compositional bias: low complexity.

The protein belongs to the oligoribonuclease family.

It is found in the cytoplasm. Functionally, 3'-to-5' exoribonuclease specific for small oligoribonucleotides. This is Oligoribonuclease from Mycolicibacterium paratuberculosis (strain ATCC BAA-968 / K-10) (Mycobacterium paratuberculosis).